The chain runs to 151 residues: 3-hydroxyacyl-[acyl-carrier-protein] dehydratase FabZ (151 aa).

The active site involves H53.

It belongs to the thioester dehydratase family. FabZ subfamily.

The protein resides in the cytoplasm. The catalysed reaction is a (3R)-hydroxyacyl-[ACP] = a (2E)-enoyl-[ACP] + H2O. Its function is as follows. Involved in unsaturated fatty acids biosynthesis. Catalyzes the dehydration of short chain beta-hydroxyacyl-ACPs and long chain saturated and unsaturated beta-hydroxyacyl-ACPs. The polypeptide is 3-hydroxyacyl-[acyl-carrier-protein] dehydratase FabZ (Erythrobacter litoralis (strain HTCC2594)).